A 308-amino-acid chain; its full sequence is Aspartate carbamoyltransferase catalytic subunit (308 aa).

Carbamoyl phosphate contacts are provided by arginine 59 and threonine 60. Lysine 87 contacts L-aspartate. Carbamoyl phosphate contacts are provided by arginine 109, histidine 139, and glutamine 142. Arginine 172 and arginine 224 together coordinate L-aspartate. Alanine 265 and proline 266 together coordinate carbamoyl phosphate.

Belongs to the aspartate/ornithine carbamoyltransferase superfamily. ATCase family. As to quaternary structure, heterododecamer (2C3:3R2) of six catalytic PyrB chains organized as two trimers (C3), and six regulatory PyrI chains organized as three dimers (R2).

The enzyme catalyses carbamoyl phosphate + L-aspartate = N-carbamoyl-L-aspartate + phosphate + H(+). It functions in the pathway pyrimidine metabolism; UMP biosynthesis via de novo pathway; (S)-dihydroorotate from bicarbonate: step 2/3. Catalyzes the condensation of carbamoyl phosphate and aspartate to form carbamoyl aspartate and inorganic phosphate, the committed step in the de novo pyrimidine nucleotide biosynthesis pathway. In Streptococcus mutans serotype c (strain ATCC 700610 / UA159), this protein is Aspartate carbamoyltransferase catalytic subunit.